The sequence spans 327 residues: Malate dehydrogenase (327 aa).

12 to 18 (GAAGQIA) is an NAD(+) binding site. 2 residues coordinate substrate: arginine 93 and arginine 99. Residues asparagine 106, glutamine 113, and 130-132 (VGN) contribute to the NAD(+) site. Substrate is bound by residues asparagine 132 and arginine 163. Histidine 188 (proton acceptor) is an active-site residue.

Belongs to the LDH/MDH superfamily. MDH type 2 family.

It carries out the reaction (S)-malate + NAD(+) = oxaloacetate + NADH + H(+). Catalyzes the reversible oxidation of malate to oxaloacetate. This is Malate dehydrogenase from Burkholderia mallei (strain NCTC 10247).